The chain runs to 421 residues: U-box domain-containing protein 25 (421 aa).

Residues 13 to 88 (QIPYHFRCPI…QEWCVANRSN (76 aa)) form the U-box domain.

It catalyses the reaction S-ubiquitinyl-[E2 ubiquitin-conjugating enzyme]-L-cysteine + [acceptor protein]-L-lysine = [E2 ubiquitin-conjugating enzyme]-L-cysteine + N(6)-ubiquitinyl-[acceptor protein]-L-lysine.. Its pathway is protein modification; protein ubiquitination. Its function is as follows. Functions as an E3 ubiquitin ligase. The chain is U-box domain-containing protein 25 (PUB25) from Arabidopsis thaliana (Mouse-ear cress).